We begin with the raw amino-acid sequence, 311 residues long: Methionyl-tRNA formyltransferase (311 aa).

109–112 (SLLP) serves as a coordination point for (6S)-5,6,7,8-tetrahydrofolate.

It belongs to the Fmt family.

It catalyses the reaction L-methionyl-tRNA(fMet) + (6R)-10-formyltetrahydrofolate = N-formyl-L-methionyl-tRNA(fMet) + (6S)-5,6,7,8-tetrahydrofolate + H(+). Its function is as follows. Attaches a formyl group to the free amino group of methionyl-tRNA(fMet). The formyl group appears to play a dual role in the initiator identity of N-formylmethionyl-tRNA by promoting its recognition by IF2 and preventing the misappropriation of this tRNA by the elongation apparatus. This is Methionyl-tRNA formyltransferase from Staphylococcus aureus (strain MW2).